Reading from the N-terminus, the 259-residue chain is Caffeoyl-CoA O-methyltransferase (259 aa).

Lysine 33 is a binding site for substrate. Residues threonine 75, glutamate 97, 99 to 100 (GV), serine 105, aspartate 123, and alanine 152 each bind S-adenosyl-L-methionine. Position 175 (aspartate 175) interacts with substrate. Aspartate 175 is an a divalent metal cation binding site. Residue aspartate 177 participates in S-adenosyl-L-methionine binding. A divalent metal cation is bound by residues aspartate 201 and asparagine 202. Residue asparagine 206 participates in substrate binding.

It belongs to the class I-like SAM-binding methyltransferase superfamily. Cation-dependent O-methyltransferase family. CCoAMT subfamily. A divalent metal cation is required as a cofactor.

It catalyses the reaction (E)-caffeoyl-CoA + S-adenosyl-L-methionine = (E)-feruloyl-CoA + S-adenosyl-L-homocysteine + H(+). Its pathway is aromatic compound metabolism; phenylpropanoid biosynthesis. Methylates caffeoyl-CoA to feruloyl-CoA and 5-hydroxyferuloyl-CoA to sinapoyl-CoA. Plays a role in the synthesis of feruloylated polysaccharides. Involved in the reinforcement of the plant cell wall. Also involved in the responding to wounding or pathogen challenge by the increased formation of cell wall-bound ferulic acid polymers. In Pinus taeda (Loblolly pine), this protein is Caffeoyl-CoA O-methyltransferase (CCOAOMT).